The primary structure comprises 927 residues: Clumping factor A (927 aa).

Positions 1 to 39 (MNMKKKEKHAIRKKSIGVASVLVGTLIGFGLLSSKEADA) are cleaved as a signal peptide. Positions 9–20 (HAIRKKSIGVAS) match the YSIRK-G/S signaling motif motif. 2 disordered regions span residues 34 to 200 (SKEA…SNKD) and 529 to 898 (FNNG…SEDE). A ligand binding A region region spans residues 40-542 (SENSVTQSDS…SGSGDGIDKP (503 aa)). A compositionally biased stretch (low complexity) spans 47–65 (SDSASNESKSNDSSSVSAA). Residues 71 to 105 (TNVSDTKTSSNTNNGETSVAQNPAQQETTQSSSTN) are compositionally biased toward polar residues. Low complexity-rich tracts occupy residues 106–132 (ATTE…ATTQ) and 143–162 (NQTS…SVNS). Residues 163–200 (PQNSTNAENVSTTQDTSTEATPSNNESAPQSTDASNKD) show a composition bias toward polar residues. The span at 547–565 (QPDEPGEIEPIPEDSDSDP) shows a compositional bias: acidic residues. The segment covering 566–598 (GSDSGSDSNSDSGSDSGSDSTSDSGSDSASDSD) has biased composition (low complexity). The span at 599–855 (SASDSDSASD…DSDSESDSNS (257 aa)) shows a compositional bias: acidic residues. Over residues 856-867 (DSESVSNNNVVP) the composition is skewed to low complexity. A compositionally biased stretch (basic and acidic residues) spans 881-890 (NEAKDSKEPL). The LPXTG sorting signal signature appears at 890-894 (LPDTG). Residue T893 is modified to Pentaglycyl murein peptidoglycan amidated threonine. Positions 894-927 (GSEDEANTSLIWGLLASIGSLLLFRRKKENKDKK) are cleaved as a propeptide — removed by sortase.

The protein belongs to the serine-aspartate repeat-containing protein (SDr) family.

Its subcellular location is the secreted. It localises to the cell wall. Its function is as follows. Cell surface-associated protein implicated in virulence. Promotes bacterial attachment exclusively to the gamma-chain of human fibrinogen. Induces formation of bacterial clumps, which diminish the ability of group IIA phospholipase A2 to cause bacterial phospholipid hydrolysis and killing. Significantly decreases macrophage phagocytosis possibly thanks to the clumps, clumped bacteria being too large to be phagocytosed. Dominant factor responsible for human platelet aggregation, which may be an important mechanism for initiating infective endocarditis. Enhances spleen cell proliferative response in vitro, contributing significantly to the immunostimulatory activity of S.aureus. This chain is Clumping factor A (clfA), found in Staphylococcus aureus (strain NCTC 8325 / PS 47).